A 652-amino-acid polypeptide reads, in one-letter code: DNA ligase (652 aa).

NAD(+) is bound by residues 29–33, 78–79, and E107; these read DSDYD and SL. K109 serves as the catalytic N6-AMP-lysine intermediate. NAD(+) is bound by residues R130, E164, K278, and K302. Residues C395, C398, C413, and C418 each contribute to the Zn(2+) site. The BRCT domain occupies 577-652; the sequence is NSDAALFGLT…IEDEDWLRKF (76 aa).

Belongs to the NAD-dependent DNA ligase family. LigA subfamily. Requires Mg(2+) as cofactor. It depends on Mn(2+) as a cofactor.

The enzyme catalyses NAD(+) + (deoxyribonucleotide)n-3'-hydroxyl + 5'-phospho-(deoxyribonucleotide)m = (deoxyribonucleotide)n+m + AMP + beta-nicotinamide D-nucleotide.. Functionally, DNA ligase that catalyzes the formation of phosphodiester linkages between 5'-phosphoryl and 3'-hydroxyl groups in double-stranded DNA using NAD as a coenzyme and as the energy source for the reaction. It is essential for DNA replication and repair of damaged DNA. The chain is DNA ligase from Streptococcus pyogenes serotype M6 (strain ATCC BAA-946 / MGAS10394).